Here is a 122-residue protein sequence, read N- to C-terminus: Small ribosomal subunit protein uS13 (122 aa).

The tract at residues 95–122 (NLPVRGQRTHTNARTRKGKAKPIAGKKK) is disordered.

It belongs to the universal ribosomal protein uS13 family. Part of the 30S ribosomal subunit. Forms a loose heterodimer with protein S19. Forms two bridges to the 50S subunit in the 70S ribosome.

Its function is as follows. Located at the top of the head of the 30S subunit, it contacts several helices of the 16S rRNA. In the 70S ribosome it contacts the 23S rRNA (bridge B1a) and protein L5 of the 50S subunit (bridge B1b), connecting the 2 subunits; these bridges are implicated in subunit movement. Contacts the tRNAs in the A and P-sites. The chain is Small ribosomal subunit protein uS13 from Methylobacterium sp. (strain 4-46).